Reading from the N-terminus, the 269-residue chain is Type 4 prepilin-like proteins leader peptide-processing enzyme (269 aa).

7 consecutive transmembrane segments (helical) span residues 13 to 33 (MPVL…VVIW), 102 to 122 (YPLV…VWPE), 124 to 144 (GWAL…VIDL), 147 to 167 (QWLP…AAWA), 178 to 198 (VTGV…AGIV), 210 to 230 (LLFA…VALI), and 249 to 269 (LPFG…QALF).

It belongs to the peptidase A24 family.

The protein localises to the cell inner membrane. It catalyses the reaction Typically cleaves a -Gly-|-Phe- bond to release an N-terminal, basic peptide of 5-8 residues from type IV prepilin, and then N-methylates the new N-terminal amino group, the methyl donor being S-adenosyl-L-methionine.. Functionally, cleaves type-4 fimbrial leader sequence and methylates the N-terminal (generally Phe) residue. The chain is Type 4 prepilin-like proteins leader peptide-processing enzyme from Escherichia coli O78:H11 (strain H10407 / ETEC).